We begin with the raw amino-acid sequence, 350 residues long: S-adenosylmethionine:tRNA ribosyltransferase-isomerase (350 aa).

Belongs to the QueA family. In terms of assembly, monomer.

It is found in the cytoplasm. The catalysed reaction is 7-aminomethyl-7-carbaguanosine(34) in tRNA + S-adenosyl-L-methionine = epoxyqueuosine(34) in tRNA + adenine + L-methionine + 2 H(+). The protein operates within tRNA modification; tRNA-queuosine biosynthesis. Its function is as follows. Transfers and isomerizes the ribose moiety from AdoMet to the 7-aminomethyl group of 7-deazaguanine (preQ1-tRNA) to give epoxyqueuosine (oQ-tRNA). In Bacillus cereus (strain G9842), this protein is S-adenosylmethionine:tRNA ribosyltransferase-isomerase.